Here is a 1006-residue protein sequence, read N- to C-terminus: Probable beta-galactosidase A (1006 aa).

The signal sequence occupies residues 1–18; that stretch reads MKLLSVCAVALLAAQAAG. Positions 96, 140, 141, and 142 each coordinate substrate. The N-linked (GlcNAc...) asparagine glycan is linked to N156. Residue N199 coordinates substrate. E200 (proton donor) is an active-site residue. The cysteines at positions 205 and 206 are disulfide-linked. N-linked (GlcNAc...) asparagine glycosylation occurs at N207. Y260 lines the substrate pocket. C266 and C315 are oxidised to a cystine. E298 acts as the Nucleophile in catalysis. Y364 contacts substrate. 6 N-linked (GlcNAc...) asparagine glycosylation sites follow: N373, N402, N422, N622, N777, and N914.

The protein belongs to the glycosyl hydrolase 35 family.

It localises to the secreted. The enzyme catalyses Hydrolysis of terminal non-reducing beta-D-galactose residues in beta-D-galactosides.. Functionally, cleaves beta-linked terminal galactosyl residues from gangliosides, glycoproteins, and glycosaminoglycans. This is Probable beta-galactosidase A (lacA) from Neosartorya fischeri (strain ATCC 1020 / DSM 3700 / CBS 544.65 / FGSC A1164 / JCM 1740 / NRRL 181 / WB 181) (Aspergillus fischerianus).